Here is a 135-residue protein sequence, read N- to C-terminus: Universal stress protein Aq_178 (135 aa).

This sequence belongs to the universal stress protein A family.

In Aquifex aeolicus (strain VF5), this protein is Universal stress protein Aq_178.